The primary structure comprises 301 residues: dTDP-4-dehydrorhamnose reductase (301 aa).

NADH is bound by residues 10–12, Asp30, 39–40, and 63–65; these read GQV, DF, and AHT. NADPH is bound at residue 11 to 12; the sequence is QV. NADPH contacts are provided by residues 39–40, 63–65, and Tyr102; these read DF and AHT. A dTDP-beta-L-rhamnose-binding site is contributed by 104 to 105; that stretch reads TD. Positions 129 and 133 each coordinate NADH. NADPH contacts are provided by Tyr129 and Lys133. Residue Tyr129 is the Proton donor/acceptor of the active site. Trp155 is a dTDP-beta-L-rhamnose binding site.

Belongs to the dTDP-4-dehydrorhamnose reductase family. As to quaternary structure, homodimer. Mg(2+) is required as a cofactor.

The catalysed reaction is dTDP-beta-L-rhamnose + NADP(+) = dTDP-4-dehydro-beta-L-rhamnose + NADPH + H(+). The protein operates within carbohydrate biosynthesis; dTDP-L-rhamnose biosynthesis. Its pathway is bacterial outer membrane biogenesis; LPS O-antigen biosynthesis. Involved in the biosynthesis of the dTDP-L-rhamnose which is an important component of lipopolysaccharide (LPS). Catalyzes the reduction of dTDP-6-deoxy-L-lyxo-4-hexulose to yield dTDP-L-rhamnose. RmlD uses NADH and NADPH nearly equally well. The protein is dTDP-4-dehydrorhamnose reductase of Escherichia coli.